The primary structure comprises 350 residues: Glucose-6-phosphate 3-dehydrogenase (350 aa).

This sequence belongs to the Gfo/Idh/MocA family.

It carries out the reaction D-glucose 6-phosphate + NAD(+) = 3-dehydro-D-glucose 6-phosphate + NADH + H(+). It functions in the pathway antibiotic biosynthesis; kanosamine biosynthesis. Involved in the biosynthesis of kanosamine (3-amino-3-deoxy-D-glucose), which is known to have antibiotic and antifungal properties, and to be a precursor of the antibiotic neotrehalosadiamine (3,3'-diamino-3,3'-dideoxy-alpha,beta-trehalose (NTD)). Catalyzes the oxidation of glucose 6-phosphate to 3-oxo-D-glucose 6-phosphate. It can only use NAD. The polypeptide is Glucose-6-phosphate 3-dehydrogenase (ntdC) (Bacillus subtilis (strain 168)).